We begin with the raw amino-acid sequence, 449 residues long: Putative methylthiotransferase MJ0865 (449 aa).

Residues 163–390 enclose the Radical SAM core domain; it reads SIRGANVYIE…EGEYRKLGLS (228 aa). Residues Cys-177, Cys-181, and Cys-184 each contribute to the [4Fe-4S] cluster site.

It belongs to the methylthiotransferase family. It depends on [4Fe-4S] cluster as a cofactor.

The protein is Putative methylthiotransferase MJ0865 of Methanocaldococcus jannaschii (strain ATCC 43067 / DSM 2661 / JAL-1 / JCM 10045 / NBRC 100440) (Methanococcus jannaschii).